A 170-amino-acid chain; its full sequence is Inner membrane protein p22 (170 aa).

The Intravirion portion of the chain corresponds to 1-3; the sequence is MST. A helical transmembrane segment spans residues 4 to 24; the sequence is LLIALIALIVLLIIILVVFLY. Residues 25–170 are Virion surface-facing; the sequence is YKKQQPPKKV…LYLPRNHKYA (146 aa).

It belongs to the asfivirus inner membrane protein p22 family.

Its subcellular location is the virion membrane. It is found in the host cell membrane. In Ornithodoros (relapsing fever ticks), this protein is Inner membrane protein p22.